Here is a 1522-residue protein sequence, read N- to C-terminus: Lysine-specific demethylase 5B (1522 aa).

A JmjN domain is found at 10 to 51 (CPVFEPSWEEFADPFAFIHKIRPIAEQTGICKVRPPPDWQPP). The 91-residue stretch at 75–165 (TRVKLNFLDQ…ILYPYNLFQS (91 aa)) folds into the ARID domain. Basic and acidic residues predominate over residues 180–192 (DTKDKEYKPHDIP). Residues 180 to 229 (DTKDKEYKPHDIPQRQSVQPSESCPPARRAKRLRAEATNIKTESDSPEVR) are disordered. Residues 284–334 (LYVCLLCGSGNDEDRLLLCDGCDDSYHTFCLIPPLHDVPKGDWRCPQCLAQ) form a PHD-type 1 zinc finger. Residue tyrosine 400 participates in 2-oxoglutarate binding. Residues 428–594 (EYLDSGWNLN…LGRQCIEHYR (167 aa)) enclose the JmjC domain. Positions 474 and 476 each coordinate Fe cation. 2-oxoglutarate is bound by residues serine 482, asparagine 484, and lysine 492. Fe cation is bound at residue histidine 562. The C5HC2 zinc finger occupies 667–719 (CYKCKTTCFMSAVYCPCKPGLLVCLYHVEDLCSCPTYQYKLGYRYTLEELYPM). The PHD-type 2 zinc-finger motif lies at 1151–1199 (LKVCVCQKEPAAPMIQCELCRGFFHTGCVSVPHALQGPRVWLCPQCRRS). The span at 1353–1365 (LQAEQKPSVGPSN) shows a compositional bias: polar residues. Disordered stretches follow at residues 1353–1373 (LQAEQKPSVGPSNEKSECCRG) and 1400–1460 (ARVR…DSED). A compositionally biased stretch (basic residues) spans 1400–1416 (ARVRKMRTPKKKKLKLS). Over residues 1426 to 1442 (RMERERERLLEAQRSSE) the composition is skewed to basic and acidic residues. The PHD-type 3 zinc finger occupies 1462-1516 (DAICPAVTCLQPEGEEVDWVQCDGSCNQWFHQVCVGISPEMAEKEDYICASCAGK).

The protein belongs to the JARID1 histone demethylase family. The cofactor is Fe(2+).

Its subcellular location is the nucleus. It catalyses the reaction N(6),N(6),N(6)-trimethyl-L-lysyl(4)-[histone H3] + 3 2-oxoglutarate + 3 O2 = L-lysyl(4)-[histone H3] + 3 formaldehyde + 3 succinate + 3 CO2. In terms of biological role, histone demethylase that demethylates 'Lys-4' of histone H3, thereby playing a central role in histone code. Does not demethylate histone H3 'Lys-9' or H3 'Lys-27'. Demethylates trimethylated, dimethylated and monomethylated H3 'Lys-4'. Acts as a transcriptional corepressor. May repress the CLOCK-BMAL1 heterodimer-mediated transcriptional activation of the core clock component PER2. The protein is Lysine-specific demethylase 5B (KDM5B) of Gallus gallus (Chicken).